The sequence spans 353 residues: Keratocan (353 aa).

The first 21 residues, 1–21 (MMTLKVCPSLLLLFLVHSVWT), serve as a signal peptide directing secretion. The 39-residue stretch at 34 to 72 (EHWSHYTFECPQECFCPPSFPNALYCDNKGLKEIPAIPA) folds into the LRRNT domain. Intrachain disulfides connect Cys-43-Cys-49 and Cys-47-Cys-59. LRR repeat units follow at residues 73-94 (RIWY…PFVN), 97-118 (HLRW…SGVL), 123-143 (RLLY…PLPV), 144-165 (GLEQ…VFSN), 168-188 (NLTM…QSDT), 194-214 (SLMQ…SIPA), 215-236 (NTLQ…YFSA), and 239-259 (KVTF…PPNG). A glycan (N-linked (GlcNAc...) (keratan sulfate) asparagine) is linked at Asn-94. N-linked (GlcNAc...) asparagine glycosylation occurs at Asn-168. A glycan (N-linked (GlcNAc...) (keratan sulfate) asparagine) is linked at Asn-223. Asn-261 is a glycosylation site (N-linked (GlcNAc...) (keratan sulfate) asparagine). LRR repeat units lie at residues 264-283 (SILD…PINA) and 284-305 (HLEH…QICP). Residue Asn-299 is glycosylated (N-linked (GlcNAc...) asparagine). Cys-304 and Cys-344 form a disulfide bridge.

It belongs to the small leucine-rich proteoglycan (SLRP) family. SLRP class II subfamily. In terms of tissue distribution, cornea.

The protein localises to the secreted. It localises to the extracellular space. The protein resides in the extracellular matrix. Its function is as follows. Plays an important role in generating and maintaining a transparent matrix within the corneal stroma. This Coturnix japonica (Japanese quail) protein is Keratocan (KERA).